Consider the following 179-residue polypeptide: Large ribosomal subunit protein uL5 (179 aa).

Lys3 carries the N6-acetyllysine modification.

Belongs to the universal ribosomal protein uL5 family. In terms of assembly, part of the 50S ribosomal subunit; part of the 5S rRNA/L5/L18/L25 subcomplex. Contacts the 5S rRNA and the P site tRNA. Forms a bridge to the 30S subunit in the 70S ribosome.

Functionally, this is one of the proteins that bind and probably mediate the attachment of the 5S RNA into the large ribosomal subunit, where it forms part of the central protuberance. In the 70S ribosome it contacts protein S13 of the 30S subunit (bridge B1b), connecting the 2 subunits; this bridge is implicated in subunit movement. Contacts the P site tRNA; the 5S rRNA and some of its associated proteins might help stabilize positioning of ribosome-bound tRNAs. In Shigella flexneri, this protein is Large ribosomal subunit protein uL5.